Here is a 270-residue protein sequence, read N- to C-terminus: Fibroblast growth factor 5 (270 aa).

The N-terminal stretch at 1–20 (MSLSLLLLLFLSHLILSAWA) is a signal peptide. The disordered stretch occupies residues 26–84 (LAPKGQPGPAATGRNPGGAGGSSTSGGTTSSSSSSVSSAPGASPGIRGSGSEQGSFQWS). Positions 40-49 (NPGGAGGSST) are enriched in gly residues. Positions 50 to 70 (SGGTTSSSSSSVSSAPGASPG) are enriched in low complexity. Residues 75–84 (GSEQGSFQWS) show a composition bias toward polar residues. N112 carries an N-linked (GlcNAc...) asparagine glycan. A disordered region spans residues 237-257 (EKKKPPSHVKPKVPLSAPRKS).

The protein belongs to the heparin-binding growth factors family. As to quaternary structure, interacts with FGFR1 and FGFR2. Affinity between fibroblast growth factors (FGFs) and their receptors is increased by heparan sulfate glycosaminoglycans that function as coreceptors.

Its subcellular location is the secreted. Plays an important role in the regulation of cell proliferation and cell differentiation. Required for normal regulation of the hair growth cycle. Functions as an inhibitor of hair elongation by promoting progression from anagen, the growth phase of the hair follicle, into catagen the apoptosis-induced regression phase. The protein is Fibroblast growth factor 5 (FGF5) of Canis lupus familiaris (Dog).